The following is a 400-amino-acid chain: Queuine tRNA-ribosyltransferase (400 aa).

Asp-93 acts as the Proton acceptor in catalysis. Substrate is bound by residues 93–97 (DSGGF), Asp-166, and Gly-247. Positions 277-283 (GIGDVDD) are RNA binding. Residue Asp-296 is the Nucleophile of the active site. The segment at 301–305 (TRLGR) is RNA binding; important for wobble base 34 recognition. Zn(2+) is bound by residues Cys-338, Cys-340, Cys-343, and His-369.

The protein belongs to the queuine tRNA-ribosyltransferase family. In terms of assembly, homodimer. Within each dimer, one monomer is responsible for RNA recognition and catalysis, while the other monomer binds to the replacement base PreQ1. Zn(2+) is required as a cofactor.

The enzyme catalyses 7-aminomethyl-7-carbaguanine + guanosine(34) in tRNA = 7-aminomethyl-7-carbaguanosine(34) in tRNA + guanine. Its pathway is tRNA modification; tRNA-queuosine biosynthesis. Its function is as follows. Catalyzes the base-exchange of a guanine (G) residue with the queuine precursor 7-aminomethyl-7-deazaguanine (PreQ1) at position 34 (anticodon wobble position) in tRNAs with GU(N) anticodons (tRNA-Asp, -Asn, -His and -Tyr). Catalysis occurs through a double-displacement mechanism. The nucleophile active site attacks the C1' of nucleotide 34 to detach the guanine base from the RNA, forming a covalent enzyme-RNA intermediate. The proton acceptor active site deprotonates the incoming PreQ1, allowing a nucleophilic attack on the C1' of the ribose to form the product. After dissociation, two additional enzymatic reactions on the tRNA convert PreQ1 to queuine (Q), resulting in the hypermodified nucleoside queuosine (7-(((4,5-cis-dihydroxy-2-cyclopenten-1-yl)amino)methyl)-7-deazaguanosine). The sequence is that of Queuine tRNA-ribosyltransferase from Roseiflexus sp. (strain RS-1).